The following is a 190-amino-acid chain: Peptidyl-tRNA hydrolase (190 aa).

Y19 contributes to the tRNA binding site. The active-site Proton acceptor is H24. TRNA contacts are provided by Y72, N74, and N121.

This sequence belongs to the PTH family.

It is found in the mitochondrion. The enzyme catalyses an N-acyl-L-alpha-aminoacyl-tRNA + H2O = an N-acyl-L-amino acid + a tRNA + H(+). Functionally, peptidyl-tRNA hydrolase involved in the recycling of tRNA-Lys from diacetyl-lysyl-tRNA-Lys and is important for mitochondrial function. This is Peptidyl-tRNA hydrolase (PTH1) from Saccharomyces cerevisiae (strain ATCC 204508 / S288c) (Baker's yeast).